The following is a 35-amino-acid chain: Photosystem II reaction center protein T (35 aa).

A helical transmembrane segment spans residues 3–23; that stretch reads ALVYTFLLVSTLGIIFFAIFF.

Belongs to the PsbT family. PSII is composed of 1 copy each of membrane proteins PsbA, PsbB, PsbC, PsbD, PsbE, PsbF, PsbH, PsbI, PsbJ, PsbK, PsbL, PsbM, PsbT, PsbY, PsbZ, Psb30/Ycf12, at least 3 peripheral proteins of the oxygen-evolving complex and a large number of cofactors. It forms dimeric complexes.

The protein resides in the plastid. It localises to the chloroplast thylakoid membrane. In terms of biological role, found at the monomer-monomer interface of the photosystem II (PS II) dimer, plays a role in assembly and dimerization of PSII. PSII is a light-driven water plastoquinone oxidoreductase, using light energy to abstract electrons from H(2)O, generating a proton gradient subsequently used for ATP formation. In Bassia hyssopifolia (Fivehorn smotherweed), this protein is Photosystem II reaction center protein T.